Here is a 289-residue protein sequence, read N- to C-terminus: ATP phosphoribosyltransferase (289 aa).

Belongs to the ATP phosphoribosyltransferase family. Long subfamily. Mg(2+) is required as a cofactor.

Its subcellular location is the cytoplasm. It catalyses the reaction 1-(5-phospho-beta-D-ribosyl)-ATP + diphosphate = 5-phospho-alpha-D-ribose 1-diphosphate + ATP. It functions in the pathway amino-acid biosynthesis; L-histidine biosynthesis; L-histidine from 5-phospho-alpha-D-ribose 1-diphosphate: step 1/9. Feedback inhibited by histidine. Functionally, catalyzes the condensation of ATP and 5-phosphoribose 1-diphosphate to form N'-(5'-phosphoribosyl)-ATP (PR-ATP). Has a crucial role in the pathway because the rate of histidine biosynthesis seems to be controlled primarily by regulation of HisG enzymatic activity. This chain is ATP phosphoribosyltransferase, found in Methanosarcina barkeri (strain Fusaro / DSM 804).